Consider the following 89-residue polypeptide: Small ribosomal subunit protein uS15 (89 aa).

It belongs to the universal ribosomal protein uS15 family. Part of the 30S ribosomal subunit. Forms a bridge to the 50S subunit in the 70S ribosome, contacting the 23S rRNA.

Functionally, one of the primary rRNA binding proteins, it binds directly to 16S rRNA where it helps nucleate assembly of the platform of the 30S subunit by binding and bridging several RNA helices of the 16S rRNA. Its function is as follows. Forms an intersubunit bridge (bridge B4) with the 23S rRNA of the 50S subunit in the ribosome. The chain is Small ribosomal subunit protein uS15 from Vibrio vulnificus (strain YJ016).